A 324-amino-acid polypeptide reads, in one-letter code: tRNA dimethylallyltransferase (324 aa).

17-24 (GPTASGKT) contributes to the ATP binding site. 19–24 (TASGKT) is a binding site for substrate. Interaction with substrate tRNA regions lie at residues 42–45 (DSAL), 166–170 (QRIQR), and 251–256 (RCVGYR).

It belongs to the IPP transferase family. In terms of assembly, monomer. Mg(2+) serves as cofactor.

The catalysed reaction is adenosine(37) in tRNA + dimethylallyl diphosphate = N(6)-dimethylallyladenosine(37) in tRNA + diphosphate. Catalyzes the transfer of a dimethylallyl group onto the adenine at position 37 in tRNAs that read codons beginning with uridine, leading to the formation of N6-(dimethylallyl)adenosine (i(6)A). This Burkholderia mallei (strain NCTC 10247) protein is tRNA dimethylallyltransferase.